We begin with the raw amino-acid sequence, 588 residues long: Ufm1-specific protease (588 aa).

Active-site residues include Cys-420, Asp-544, and His-546.

The protein belongs to the peptidase C78 family. Interacts with odr-4.

Its subcellular location is the endoplasmic reticulum membrane. It is found in the cytoplasm. The protein localises to the perinuclear region. Functionally, thiol protease which recognizes and hydrolyzes the peptide bond at the C-terminal Gly of ufm-1, a ubiquitin-like modifier protein bound to a number of target proteins. Required, with oct-4, for the localization of a subset of 7 transmembrane domain odorant receptors, including odr-10, to the cilia of olfactory neurons AWA and AWC. Operates in aggregation behavior, and responses to oxygen levels. This is Ufm1-specific protease from Caenorhabditis briggsae.